The primary structure comprises 337 residues: GTPase Obg (337 aa).

An Obg domain is found at methionine 1–leucine 159. In terms of domain architecture, OBG-type G spans alanine 160 to glycine 331. Residues glycine 166–serine 173, phenylalanine 191–isoleucine 195, aspartate 213–glycine 216, threonine 283–aspartate 286, and serine 312–valine 314 each bind GTP. 2 residues coordinate Mg(2+): serine 173 and threonine 193.

Belongs to the TRAFAC class OBG-HflX-like GTPase superfamily. OBG GTPase family. As to quaternary structure, monomer. Mg(2+) is required as a cofactor.

It localises to the cytoplasm. In terms of biological role, an essential GTPase which binds GTP, GDP and possibly (p)ppGpp with moderate affinity, with high nucleotide exchange rates and a fairly low GTP hydrolysis rate. Plays a role in control of the cell cycle, stress response, ribosome biogenesis and in those bacteria that undergo differentiation, in morphogenesis control. This is GTPase Obg from Thermodesulfovibrio yellowstonii (strain ATCC 51303 / DSM 11347 / YP87).